The primary structure comprises 1773 residues: Mucin-22 (1773 aa).

The N-terminal stretch at 1 to 26 (MRRGNISPAFWFLWLLLFGLLGPSSE) is a signal peptide. Residues 27–1660 (NTTAFTKGSD…VIKPSGYLQP (1634 aa)) lie on the Extracellular side of the membrane. 8 disordered regions span residues 61–102 (TGSK…TDSG), 176–357 (TMAS…SETT), 372–405 (MGSE…VGSE), 434–572 (SETI…STAS), 590–674 (TVGS…EGSE), 754–1026 (DTTT…ETTM), 1064–1485 (TTIA…GSET), and 1603–1639 (MGAS…SMGT). The tract at residues 153 to 1514 (MASSTTSTAG…PTATSLTGSE (1362 aa)) is 124 X 10 AA approximate repeats. Residues 178–243 (ASTTGSETAT…GSEATTTSTA (66 aa)) show a composition bias toward low complexity. Over residues 248–258 (ITASSMSSETT) the composition is skewed to polar residues. A compositionally biased stretch (low complexity) spans 262 to 357 (AAGSNTTTAS…TVSTAGSETT (96 aa)). 2 stretches are compositionally biased toward low complexity: residues 440 to 481 (STAG…AAST) and 490 to 546 (STAG…SEPT). The segment covering 547–572 (MASTMGSETTMASTIGPETTKVSTAS) has biased composition (polar residues). 2 stretches are compositionally biased toward low complexity: residues 755–1025 (TTTA…SETT) and 1064–1465 (TTIA…GSET). Composition is skewed to polar residues over residues 1466–1485 (NTAC…GSET) and 1615–1639 (RTTT…SMGT). Residues 1661–1681 (WAIILISLAAVVAAVGLSVGL) form a helical membrane-spanning segment. Residues 1682-1773 (SFCLRNLFFP…GGHYGHGGGH (92 aa)) are Cytoplasmic-facing.

Expressed in lung by serous cells of the submucosal gland (at protein level). Detected in the placenta, lung and testis.

The protein resides in the membrane. This Homo sapiens (Human) protein is Mucin-22 (MUC22).